Here is a 342-residue protein sequence, read N- to C-terminus: Delta-aminolevulinic acid dehydratase (342 aa).

Residues C133, C135, and C143 each coordinate Zn(2+). The active-site Schiff-base intermediate with substrate is K210. Residues R220 and R232 each coordinate 5-aminolevulinate. A Phosphoserine modification is found at S254. The Schiff-base intermediate with substrate role is filled by K263. 2 residues coordinate 5-aminolevulinate: S290 and Y329.

The protein belongs to the ALAD family. As to quaternary structure, homooctamer. Requires Zn(2+) as cofactor.

It catalyses the reaction 2 5-aminolevulinate = porphobilinogen + 2 H2O + H(+). The protein operates within porphyrin-containing compound metabolism; protoporphyrin-IX biosynthesis; coproporphyrinogen-III from 5-aminolevulinate: step 1/4. Its activity is regulated as follows. Inhibited by divalent lead ions. Functionally, catalyzes an early step in the biosynthesis of tetrapyrroles. Binds two molecules of 5-aminolevulinate per subunit, each at a distinct site, and catalyzes their condensation to form porphobilinogen. This Saccharomyces cerevisiae (strain ATCC 204508 / S288c) (Baker's yeast) protein is Delta-aminolevulinic acid dehydratase (HEM2).